A 145-amino-acid polypeptide reads, in one-letter code: D-aminoacyl-tRNA deacylase (145 aa).

The short motif at 137 to 138 is the Gly-cisPro motif, important for rejection of L-amino acids element; it reads GP.

This sequence belongs to the DTD family. In terms of assembly, homodimer.

It is found in the cytoplasm. The catalysed reaction is glycyl-tRNA(Ala) + H2O = tRNA(Ala) + glycine + H(+). It carries out the reaction a D-aminoacyl-tRNA + H2O = a tRNA + a D-alpha-amino acid + H(+). Functionally, an aminoacyl-tRNA editing enzyme that deacylates mischarged D-aminoacyl-tRNAs. Also deacylates mischarged glycyl-tRNA(Ala), protecting cells against glycine mischarging by AlaRS. Acts via tRNA-based rather than protein-based catalysis; rejects L-amino acids rather than detecting D-amino acids in the active site. By recycling D-aminoacyl-tRNA to D-amino acids and free tRNA molecules, this enzyme counteracts the toxicity associated with the formation of D-aminoacyl-tRNA entities in vivo and helps enforce protein L-homochirality. The chain is D-aminoacyl-tRNA deacylase from Salmonella typhi.